The primary structure comprises 100 residues: Large ribosomal subunit protein bL21 (100 aa).

Belongs to the bacterial ribosomal protein bL21 family. As to quaternary structure, part of the 50S ribosomal subunit. Contacts protein L20.

In terms of biological role, this protein binds to 23S rRNA in the presence of protein L20. This is Large ribosomal subunit protein bL21 from Mycoplasma genitalium (strain ATCC 33530 / DSM 19775 / NCTC 10195 / G37) (Mycoplasmoides genitalium).